The following is a 625-amino-acid chain: Chaperone protein HtpG (625 aa).

The interval Met-1 to Arg-341 is a; substrate-binding. A b region spans residues Glu-342–Lys-551. A c region spans residues Val-552–Ala-625.

This sequence belongs to the heat shock protein 90 family. As to quaternary structure, homodimer.

It is found in the cytoplasm. In terms of biological role, molecular chaperone. Has ATPase activity. This chain is Chaperone protein HtpG, found in Halalkalibacterium halodurans (strain ATCC BAA-125 / DSM 18197 / FERM 7344 / JCM 9153 / C-125) (Bacillus halodurans).